The chain runs to 270 residues: Phosphatidylinositol transfer protein alpha isoform (270 aa).

Thr-58, Lys-60, Glu-85, Asn-89, Thr-96, and Lys-194 together coordinate a 1,2-diacyl-sn-glycero-3-phospho-(1D-myo-inositol). N6-acetyllysine is present on Lys-215. Residues 250–263 (TKRQLDEMRQKDPV) show a composition bias toward basic and acidic residues. Residues 250-270 (TKRQLDEMRQKDPVKGMTADD) are disordered.

This sequence belongs to the PtdIns transfer protein family. PI transfer class I subfamily. In terms of processing, phosphorylated by PKC in a calcium and phosphatidylserine-dependent manner.

It is found in the cytoplasm. The protein localises to the nucleus. The enzyme catalyses a 1,2-diacyl-sn-glycero-3-phosphocholine(in) = a 1,2-diacyl-sn-glycero-3-phosphocholine(out). It catalyses the reaction a 1,2-diacyl-sn-glycero-3-phospho-(1D-myo-inositol)(in) = a 1,2-diacyl-sn-glycero-3-phospho-(1D-myo-inositol)(out). Functionally, catalyzes the transfer of phosphatidylinositol (PI) and phosphatidylcholine (PC) between membranes. Shows a preference for PI and PC containing shorter saturated or monosaturated acyl chains at the sn-1 and sn-2 positions. Preference order for PC is C16:1 &gt; C16:0 &gt; C18:1 &gt; C18:0 &gt; C20:4 and for PI is C16:1 &gt; C16:0 &gt; C18:1 &gt; C18:0 &gt; C20:4 &gt; C20:3. This is Phosphatidylinositol transfer protein alpha isoform (PITPNA) from Oryctolagus cuniculus (Rabbit).